A 389-amino-acid polypeptide reads, in one-letter code: Trans-2-enoyl-CoA reductase [NADH] (389 aa).

NAD(+) contacts are provided by residues 47 to 52, 73 to 74, 110 to 111, and 138 to 139; these read GASTGY, FE, DA, and LA. Tyr-224 contacts substrate. Tyr-234 functions as the Proton donor in the catalytic mechanism. Residues Lys-243 and 272–274 each bind NAD(+); that span reads LVT.

Belongs to the TER reductase family. In terms of assembly, monomer.

The enzyme catalyses a 2,3-saturated acyl-CoA + NAD(+) = a (2E)-enoyl-CoA + NADH + H(+). It participates in lipid metabolism; fatty acid biosynthesis. Involved in the fatty acid synthesis (FAS II). Catalyzes the reduction of a carbon-carbon double bond in an enoyl moiety that is covalently linked to a coenzyme A (CoA). In Clostridium perfringens (strain SM101 / Type A), this protein is Trans-2-enoyl-CoA reductase [NADH].